A 406-amino-acid polypeptide reads, in one-letter code: Elongation factor Tu-A (406 aa).

One can recognise a tr-type G domain in the interval 10-215; that stretch reads KPHVNVGTIG…AIDEYIPTPV (206 aa). A G1 region spans residues 19 to 26; sequence GHVDHGKT. A GTP-binding site is contributed by 19–26; that stretch reads GHVDHGKT. A Mg(2+)-binding site is contributed by Thr-26. Residues 61 to 65 form a G2 region; sequence GITIN. Residues 82 to 85 are G3; that stretch reads DCPG. GTP contacts are provided by residues 82 to 86 and 137 to 140; these read DCPGH and NKVD. The interval 137-140 is G4; it reads NKVD. The segment at 175-177 is G5; that stretch reads SAL. Thr-395 carries the phosphothreonine modification.

The protein belongs to the TRAFAC class translation factor GTPase superfamily. Classic translation factor GTPase family. EF-Tu/EF-1A subfamily. Monomer. Binds to the 70S ribosome, contacts tmRNA during trans-translation. Post-translationally, phosphorylated on a threonine.

The protein localises to the cytoplasm. It catalyses the reaction GTP + H2O = GDP + phosphate + H(+). Functionally, GTP hydrolase that promotes the GTP-dependent binding of aminoacyl-tRNA to the A-site of ribosomes during protein biosynthesis. EF-Tu-GDP binds to the acceptor arm of tmRNA by interacting with its acceptor arm, suggesting that GTP hydrolysis by EF-Tu is essential for tmRNA function. In terms of biological role, protects glycyl-tRNA(Gly) from hydrolysis by E.coli D-aminoacyl-tRNA deacylase (dtd). The chain is Elongation factor Tu-A from Thermus thermophilus (strain ATCC 27634 / DSM 579 / HB8).